The chain runs to 251 residues: Capsid protein (251 aa).

Residues 3–20 carry the Bipartite nuclear localization signal motif; the sequence is KRDLPWRSMAGTSKVSRN. Positions 35 to 49 match the Nuclear localization signal motif; sequence KAAEWVNRPMYRKPR. A zinc finger lies at 63–80; the sequence is CEGPCKVQSFEQRHDISH. A Nuclear export signal motif is present at residues 96-117; that stretch reads ITHRVGKRFCVKSVYILGKIWM. The Bipartite nuclear localization signal motif lies at 195–242; that stretch reads KRFWKVNNHVVYNHQEAGKYENHTENALLLYMACTHASNPVYATLKIR.

This sequence belongs to the geminiviridae capsid protein family. Homomultimer. Binds to single-stranded and double-stranded viral DNA. Interacts (via nuclear localization signals) with host importin alpha-1a.

The protein resides in the virion. The protein localises to the host nucleus. Functionally, encapsidates the viral DNA into characteristic twinned ('geminate') particles. Binds the genomic viral ssDNA and shuttles it into and out of the cell nucleus. The CP of bipartite geminiviruses is not required for cell-to-cell or systemic movement. This Tomato mottle virus (isolate Florida) (ToMoV) protein is Capsid protein.